Here is a 187-residue protein sequence, read N- to C-terminus: ATP synthase subunit b (187 aa).

The chain crosses the membrane as a helical span at residues 4–24 (LALFALLMVPAILLASGHDSG).

The protein belongs to the ATPase B chain family. In terms of assembly, F-type ATPases have 2 components, F(1) - the catalytic core - and F(0) - the membrane proton channel. F(1) has five subunits: alpha(3), beta(3), gamma(1), delta(1), epsilon(1). F(0) has three main subunits: a(1), b(2) and c(10-14). The alpha and beta chains form an alternating ring which encloses part of the gamma chain. F(1) is attached to F(0) by a central stalk formed by the gamma and epsilon chains, while a peripheral stalk is formed by the delta and b chains.

The protein resides in the cell inner membrane. In terms of biological role, f(1)F(0) ATP synthase produces ATP from ADP in the presence of a proton or sodium gradient. F-type ATPases consist of two structural domains, F(1) containing the extramembraneous catalytic core and F(0) containing the membrane proton channel, linked together by a central stalk and a peripheral stalk. During catalysis, ATP synthesis in the catalytic domain of F(1) is coupled via a rotary mechanism of the central stalk subunits to proton translocation. Its function is as follows. Component of the F(0) channel, it forms part of the peripheral stalk, linking F(1) to F(0). This Sulfurovum sp. (strain NBC37-1) protein is ATP synthase subunit b.